We begin with the raw amino-acid sequence, 855 residues long: Envelope glycoprotein gp150 (855 aa).

Residues 1 to 784 lie on the Extracellular side of the membrane; it reads MAEGFAVNRQ…WLGNIPRYLK (784 aa). Asparagine 220, asparagine 258, asparagine 269, asparagine 274, asparagine 298, asparagine 330, asparagine 336, asparagine 342, asparagine 418, asparagine 422, asparagine 448, asparagine 469, asparagine 481, asparagine 499, asparagine 518, asparagine 531, and asparagine 548 each carry an N-linked (GlcNAc...) asparagine; by host glycan. A fusion peptide region spans residues 615–635; it reads VMLALATVLSMAGAGTGATAI. Residues 642 to 692 adopt a coiled-coil conformation; that stretch reads HQVLATHQETIEKITEALKVNNLRLVTLEHQVLVIGLKVEAIEKFLYTAFA. The immunosuppression stretch occupies residues 661-679; it reads VNNLRLVTLEHQVLVIGLK. Residues asparagine 716, asparagine 720, and asparagine 736 are each glycosylated (N-linked (GlcNAc...) asparagine; by host). The stretch at 735–771 forms a coiled coil; sequence YNQTKDLQQKFYEIIMDMEQNNVQGRKGLQQLQEWED. A helical transmembrane segment spans residues 785 to 805; sequence GLLGGILGIGLGVLLLILCLP. Residues 806-855 are Cytoplasmic-facing; sequence TLVDCIRNCISKVLGYTVIAMPEVEEEEIQPPMELRRNGRQCDMSEKEEE. Residues 835 to 855 form a disordered region; the sequence is QPPMELRRNGRQCDMSEKEEE.

The mature envelope protein (Env) consists of a trimer of SU-TM heterodimers attached by noncovalent interactions or by a labile interchain disulfide bond. Specific enzymatic cleavages in vivo yield mature proteins. Envelope glycoproteins are synthesized as an inactive precursor that is N-glycosylated and processed likely by host cell furin or by a furin-like protease in the Golgi to yield the mature SU and TM proteins. The cleavage site between SU and TM requires the minimal sequence [KR]-X-[KR]-R.

The protein resides in the virion membrane. It localises to the host cell membrane. The surface protein (SU) attaches the virus to the host cell by binding to its receptor. This interaction triggers the refolding of the transmembrane protein (TM) and is thought to activate its fusogenic potential by unmasking its fusion peptide. Fusion occurs at the host cell plasma membrane. In terms of biological role, the transmembrane protein (TM) acts as a class I viral fusion protein. Under the current model, the protein has at least 3 conformational states: pre-fusion native state, pre-hairpin intermediate state, and post-fusion hairpin state. During viral and target cell membrane fusion, the coiled coil regions (heptad repeats) assume a trimer-of-hairpins structure, positioning the fusion peptide in close proximity to the C-terminal region of the ectodomain. The formation of this structure appears to drive apposition and subsequent fusion of viral and target cell membranes. Membranes fusion leads to delivery of the nucleocapsid into the cytoplasm. The sequence is that of Envelope glycoprotein gp150 (env) from Feline immunodeficiency virus (strain UK2) (FIV).